The sequence spans 184 residues: Adenylate kinase 1 (184 aa).

An ATP-binding site is contributed by 11–16; that stretch reads GAGKGT. The tract at residues 31–60 is NMP; it reads STGDILRQAMKEQTPLGIKAQSYVDSGELV. AMP is bound by residues threonine 32, arginine 37, 58–60, 86–89, and glutamine 93; these read ELV and GFPR. Residues 127 to 133 are LID; the sequence is SRGRKDD. Arginine 128 is a binding site for ATP. AMP contacts are provided by arginine 130 and arginine 141. Glutamine 169 is a binding site for ATP.

The protein belongs to the adenylate kinase family. In terms of assembly, monomer.

The protein resides in the cytoplasm. It carries out the reaction AMP + ATP = 2 ADP. It functions in the pathway purine metabolism; AMP biosynthesis via salvage pathway; AMP from ADP: step 1/1. Functionally, catalyzes the reversible transfer of the terminal phosphate group between ATP and AMP. Plays an important role in cellular energy homeostasis and in adenine nucleotide metabolism. The protein is Adenylate kinase 1 of Nostoc sp. (strain PCC 7120 / SAG 25.82 / UTEX 2576).